Reading from the N-terminus, the 126-residue chain is Acidic phospholipase A2 3 (126 aa).

Residues 1-7 constitute a propeptide that is removed on maturation; it reads SNRPMPL. 7 disulfides stabilise this stretch: Cys18-Cys78, Cys33-Cys125, Cys35-Cys51, Cys50-Cys106, Cys57-Cys99, Cys67-Cys92, and Cys85-Cys97. 3 residues coordinate Ca(2+): Tyr34, Gly36, and Gly38. The active site involves His54. Asp55 serves as a coordination point for Ca(2+). The active site involves Asp100.

The protein belongs to the phospholipase A2 family. Group I subfamily. D49 sub-subfamily. Ca(2+) is required as a cofactor. In terms of tissue distribution, expressed by the venom gland.

It is found in the secreted. The enzyme catalyses a 1,2-diacyl-sn-glycero-3-phosphocholine + H2O = a 1-acyl-sn-glycero-3-phosphocholine + a fatty acid + H(+). Its function is as follows. PLA2 catalyzes the calcium-dependent hydrolysis of the 2-acyl groups in 3-sn-phosphoglycerides. The polypeptide is Acidic phospholipase A2 3 (Naja sagittifera (Andaman cobra)).